Reading from the N-terminus, the 374-residue chain is Anhydro-N-acetylmuramic acid kinase (374 aa).

12 to 19 (GTSLDGVD) serves as a coordination point for ATP.

It belongs to the anhydro-N-acetylmuramic acid kinase family.

It catalyses the reaction 1,6-anhydro-N-acetyl-beta-muramate + ATP + H2O = N-acetyl-D-muramate 6-phosphate + ADP + H(+). It functions in the pathway amino-sugar metabolism; 1,6-anhydro-N-acetylmuramate degradation. The protein operates within cell wall biogenesis; peptidoglycan recycling. In terms of biological role, catalyzes the specific phosphorylation of 1,6-anhydro-N-acetylmuramic acid (anhMurNAc) with the simultaneous cleavage of the 1,6-anhydro ring, generating MurNAc-6-P. Is required for the utilization of anhMurNAc either imported from the medium or derived from its own cell wall murein, and thus plays a role in cell wall recycling. The protein is Anhydro-N-acetylmuramic acid kinase of Salmonella arizonae (strain ATCC BAA-731 / CDC346-86 / RSK2980).